Reading from the N-terminus, the 536-residue chain is CTP synthase (536 aa).

Residues 1–267 (MTKYIFVTGG…DQIVCDHLKL (267 aa)) form an amidoligase domain region. Serine 13 contributes to the CTP binding site. Serine 13 contributes to the UTP binding site. 14–19 (SIGKGI) is an ATP binding site. Tyrosine 54 is an L-glutamine binding site. Residue aspartate 71 participates in ATP binding. 2 residues coordinate Mg(2+): aspartate 71 and glutamate 141. CTP-binding positions include 148 to 150 (DIE), 188 to 193 (KTKPTQ), and lysine 224. UTP-binding positions include 188 to 193 (KTKPTQ) and lysine 224. Positions 292-535 (KIALVGKYVE…ITAAVENSQA (244 aa)) constitute a Glutamine amidotransferase type-1 domain. Position 354 (glycine 354) interacts with L-glutamine. Residue cysteine 381 is the Nucleophile; for glutamine hydrolysis of the active site. L-glutamine is bound by residues 382 to 385 (LGMQ), glutamate 405, and arginine 463. Active-site residues include histidine 508 and glutamate 510.

The protein belongs to the CTP synthase family. In terms of assembly, homotetramer.

The enzyme catalyses UTP + L-glutamine + ATP + H2O = CTP + L-glutamate + ADP + phosphate + 2 H(+). The catalysed reaction is L-glutamine + H2O = L-glutamate + NH4(+). It carries out the reaction UTP + NH4(+) + ATP = CTP + ADP + phosphate + 2 H(+). It functions in the pathway pyrimidine metabolism; CTP biosynthesis via de novo pathway; CTP from UDP: step 2/2. Its activity is regulated as follows. Allosterically activated by GTP, when glutamine is the substrate; GTP has no effect on the reaction when ammonia is the substrate. The allosteric effector GTP functions by stabilizing the protein conformation that binds the tetrahedral intermediate(s) formed during glutamine hydrolysis. Inhibited by the product CTP, via allosteric rather than competitive inhibition. Its function is as follows. Catalyzes the ATP-dependent amination of UTP to CTP with either L-glutamine or ammonia as the source of nitrogen. Regulates intracellular CTP levels through interactions with the four ribonucleotide triphosphates. The chain is CTP synthase from Streptococcus mutans serotype c (strain ATCC 700610 / UA159).